A 388-amino-acid chain; its full sequence is Processive diacylglycerol beta-glucosyltransferase (388 aa).

This sequence belongs to the glycosyltransferase 28 family. UgtP subfamily.

It localises to the cell membrane. It carries out the reaction a 1,2-diacyl-3-O-(beta-D-glucopyranosyl)-sn-glycerol + UDP-alpha-D-glucose = a 1,2-diacyl-3-O-(beta-D-Glc-(1-&gt;6)-beta-D-Glc)-sn-glycerol + UDP + H(+). It catalyses the reaction a 1,2-diacyl-3-O-(beta-D-Glc-(1-&gt;6)-beta-D-Glc)-sn-glycerol + UDP-alpha-D-glucose = a 1,2-diacyl-3-O-(beta-D-Glc-(1-&gt;6)-beta-D-Glc-(1-&gt;6)-beta-D-Glc)-sn-glycerol + UDP + H(+). The enzyme catalyses a 1,2-diacyl-sn-glycerol + UDP-alpha-D-glucose = a 1,2-diacyl-3-O-(beta-D-glucopyranosyl)-sn-glycerol + UDP + H(+). Its pathway is glycolipid metabolism; diglucosyl-diacylglycerol biosynthesis. Functionally, processive glucosyltransferase involved in the biosynthesis of both the bilayer- and non-bilayer-forming membrane glucolipids. Is able to successively transfer up to three glucosyl residues to diacylglycerol (DAG), thereby catalyzing the formation of beta-monoglucosyl-DAG (3-O-(beta-D-glucopyranosyl)-1,2-diacyl-sn-glycerol), beta-diglucosyl-DAG (3-O-(beta-D-glucopyranosyl-beta-(1-&gt;6)-D-glucopyranosyl)-1,2-diacyl-sn-glycerol) and beta-triglucosyl-DAG (3-O-(beta-D-glucopyranosyl-beta-(1-&gt;6)-D-glucopyranosyl-beta-(1-&gt;6)-D-glucopyranosyl)-1,2-diacyl-sn-glycerol). Beta-diglucosyl-DAG is the predominant glycolipid found in Bacillales and is also used as a membrane anchor for lipoteichoic acid (LTA). This chain is Processive diacylglycerol beta-glucosyltransferase, found in Bacillus cereus (strain AH187).